A 326-amino-acid polypeptide reads, in one-letter code: Phosphotriesterase homology protein (326 aa).

Positions 22, 24, 145, 178, 207, and 264 each coordinate Zn(2+). Lys-145 is modified (N6-carboxylysine).

Belongs to the metallo-dependent hydrolases superfamily. Phosphotriesterase family. The cofactor is Zn(2+).

This chain is Phosphotriesterase homology protein (php), found in Mycobacterium tuberculosis (strain CDC 1551 / Oshkosh).